Reading from the N-terminus, the 530-residue chain is Inactive ubiquitin carboxyl-terminal hydrolase 17-like protein 7 (530 aa).

The USP domain occupies 80-375 (AGLQKIGNTF…QAYVLFYIQK (296 aa)). Positions 382–392 (SESVSRGREPR) are enriched in basic and acidic residues. 3 disordered regions span residues 382–412 (SESVSRGREPRALGAEDTDRPATQGELKRDH), 431–454 (ESTLDHWKFPQEQNKTKPEFNVRK), and 490–530 (SSTK…LVCQ). The segment covering 490-512 (SSTKPTDQESMNTGTLASLQGST) has biased composition (polar residues). The segment covering 513–524 (RRSKGNNKHSKR) has biased composition (basic residues).

It belongs to the peptidase C19 family. USP17 subfamily.

It is found in the nucleus. The protein resides in the endoplasmic reticulum. This is Inactive ubiquitin carboxyl-terminal hydrolase 17-like protein 7 (USP17L7) from Homo sapiens (Human).